The following is a 483-amino-acid chain: UDP-N-acetylmuramoyl-L-alanyl-D-glutamate--L-lysine ligase (483 aa).

Ser-44 serves as a coordination point for UDP-N-acetyl-alpha-D-muramoyl-L-alanyl-D-glutamate. Position 120–126 (120–126 (GTKGKTT)) interacts with ATP. UDP-N-acetyl-alpha-D-muramoyl-L-alanyl-D-glutamate-binding positions include 162-163 (TT), Ser-189, and Arg-197. Residue Lys-231 is modified to N6-carboxylysine. An L-lysine recognition motif motif is present at residues 406–409 (DDPN).

This sequence belongs to the MurCDEF family. MurE subfamily. In terms of processing, carboxylation is probably crucial for Mg(2+) binding and, consequently, for the gamma-phosphate positioning of ATP.

The protein localises to the cytoplasm. The enzyme catalyses UDP-N-acetyl-alpha-D-muramoyl-L-alanyl-D-glutamate + L-lysine + ATP = UDP-N-acetyl-alpha-D-muramoyl-L-alanyl-gamma-D-glutamyl-L-lysine + ADP + phosphate + H(+). Its pathway is cell wall biogenesis; peptidoglycan biosynthesis. Functionally, catalyzes the addition of L-lysine to the nucleotide precursor UDP-N-acetylmuramoyl-L-alanyl-D-glutamate (UMAG) in the biosynthesis of bacterial cell-wall peptidoglycan. The polypeptide is UDP-N-acetylmuramoyl-L-alanyl-D-glutamate--L-lysine ligase (Streptococcus mutans serotype c (strain ATCC 700610 / UA159)).